Reading from the N-terminus, the 487-residue chain is Multiple inositol polyphosphate phosphatase 1 (487 aa).

Positions 1 to 30 (MLRAPGCLLRTSVAPAAALAAALLSSLARC) are cleaved as a signal peptide. Histidine 89 is an active-site residue. 2 N-linked (GlcNAc...) asparagine glycosylation sites follow: asparagine 242 and asparagine 481. The Prevents secretion from ER signature appears at 484 to 487 (SDEL).

The protein belongs to the histidine acid phosphatase family. MINPP1 subfamily. Post-translationally, N-glycosylated. As to expression, widely expressed with highest levels in kidney, liver, cerebellum and placenta.

The protein localises to the endoplasmic reticulum lumen. The protein resides in the secreted. It is found in the cell membrane. The catalysed reaction is 1D-myo-inositol hexakisphosphate + H2O = 1D-myo-inositol 1,2,4,5,6-pentakisphosphate + phosphate. It carries out the reaction 1D-myo-inositol 1,2,4,5,6-pentakisphosphate + H2O = 1D-myo-inositol 1,2,5,6-tetrakisphosphate + phosphate. It catalyses the reaction 1D-myo-inositol 1,2,5,6-tetrakisphosphate + H2O = 1D-myo-inositol 1,2,6-trisphosphate + phosphate. The enzyme catalyses 1D-myo-inositol 1,2,6-trisphosphate + H2O = 1D-myo-inositol 1,2-bisphosphate + phosphate. The catalysed reaction is 1D-myo-inositol 1,2-bisphosphate + H2O = 1D-myo-inositol 2-phosphate + phosphate. It carries out the reaction 1D-myo-inositol hexakisphosphate + H2O = 1D-myo-inositol 1,2,3,5,6-pentakisphosphate + phosphate. It catalyses the reaction 1D-myo-inositol 1,2,3,5,6-pentakisphosphate + H2O = 1D-myo-inositol 1,2,3,6-tetrakisphosphate + phosphate. The enzyme catalyses 1D-myo-inositol 1,2,3,6-tetrakisphosphate + H2O = 1D-myo-inositol 1,2,3-trisphosphate + phosphate. The catalysed reaction is 1D-myo-inositol 1,2,3-trisphosphate + H2O = 1D-myo-inositol 2,3-bisphosphate + phosphate. It carries out the reaction 1D-myo-inositol 2,3-bisphosphate + H2O = 1D-myo-inositol 2-phosphate + phosphate. It catalyses the reaction 1D-myo-inositol 1,3,4,5,6-pentakisphosphate + H2O = 1D-myo-inositol 1,4,5,6-tetrakisphosphate + phosphate. The enzyme catalyses 1D-myo-inositol 1,4,5,6-tetrakisphosphate + H2O = 1D-myo-inositol 1,4,5-trisphosphate + phosphate. The catalysed reaction is (2R)-2,3-bisphosphoglycerate + H2O = (2R)-2-phosphoglycerate + phosphate. Multiple inositol polyphosphate phosphatase that hydrolyzes 1D-myo-inositol 1,3,4,5,6-pentakisphosphate (InsP5[2OH]) and 1D-myo-inositol hexakisphosphate (InsP6) to a range of less phosphorylated inositol phosphates. This regulates the availability of these various small molecule second messengers and metal chelators which control many aspects of cell physiology. Has a weak in vitro activity towards 1D-myo-inositol 1,4,5-trisphosphate which is unlikely to be physiologically relevant. By regulating intracellular inositol polyphosphates pools, which act as metal chelators, it may control the availability of intracellular calcium and iron, which are important for proper neuronal development and homeostasis. May have a dual substrate specificity, and function as a 2,3-bisphosphoglycerate 3-phosphatase hydrolyzing 2,3-bisphosphoglycerate to 2-phosphoglycerate. 2,3-bisphosphoglycerate (BPG) is formed as part of the Rapoport-Luebering glycolytic bypass and is a regulator of systemic oxygen homeostasis as the major allosteric effector of hemoglobin. This chain is Multiple inositol polyphosphate phosphatase 1, found in Homo sapiens (Human).